A 205-amino-acid polypeptide reads, in one-letter code: MELKLSNEKGEAAGQLEVSDQAFDAPFRESLVHQVVTAHLAGARAGTKAQKTRSEVAGGGKKPWRQKGTGNARAGTIRSPLWRGGGQTFAAKPRDFSQKVNRKMYRGALRSILSELARQDRLVVVKQLTVDAPKTRELKARLEGLGVREGLIVVDEIDANLELAARNLPRLGVVDAAGVDPASLVGAERVVITESAIRRVEEWLS.

Positions 43 to 78 are disordered; the sequence is ARAGTKAQKTRSEVAGGGKKPWRQKGTGNARAGTIR.

This sequence belongs to the universal ribosomal protein uL4 family. As to quaternary structure, part of the 50S ribosomal subunit.

In terms of biological role, one of the primary rRNA binding proteins, this protein initially binds near the 5'-end of the 23S rRNA. It is important during the early stages of 50S assembly. It makes multiple contacts with different domains of the 23S rRNA in the assembled 50S subunit and ribosome. Forms part of the polypeptide exit tunnel. This chain is Large ribosomal subunit protein uL4, found in Halorhodospira halophila (strain DSM 244 / SL1) (Ectothiorhodospira halophila (strain DSM 244 / SL1)).